The primary structure comprises 340 residues: Heat-inducible transcription repressor HrcA (340 aa).

This sequence belongs to the HrcA family.

Negative regulator of class I heat shock genes (grpE-dnaK-dnaJ and groELS operons). Prevents heat-shock induction of these operons. The chain is Heat-inducible transcription repressor HrcA from Phytoplasma australiense.